Reading from the N-terminus, the 151-residue chain is Putative olfactory receptor 13C6 (151 aa).

Residues 1-27 (MVSANQTASVTEFILLGLSAHPKLEKT) are Extracellular-facing. Asparagine 5 is a glycosylation site (N-linked (GlcNAc...) asparagine). Residues 28–48 (FFVLILLMYLVILLGNGVLIL) form a helical membrane-spanning segment. Residues 49–61 (MTVSNSHLHMPMY) are Cytoplasmic-facing. The helical transmembrane segment at 62–82 (FFLGNLSFLDICYTTSSVPLI) threads the bilayer. Residues 83-100 (LDSFLTPRKTISFSACAV) are Extracellular-facing. Residues 101–121 (QMFLSFAMGATECVLLSMMAF) traverse the membrane as a helical segment.

This sequence belongs to the G-protein coupled receptor 1 family.

It localises to the cell membrane. In terms of biological role, odorant receptor. This is Putative olfactory receptor 13C6 from Homo sapiens (Human).